Reading from the N-terminus, the 702-residue chain is Autophagy-related protein 9 (702 aa).

Over 1–205 (MFYQPAQNKK…GKGLSCIIVH (205 aa)) the chain is Cytoplasmic. Residues 35–128 (QESLDSDEDE…SKQKPALPNF (94 aa)) form a disordered region. Over residues 38 to 47 (LDSDEDESSP) the composition is skewed to acidic residues. The span at 94–107 (SSKVPSKHPSPSFP) shows a compositional bias: low complexity. A compositionally biased stretch (polar residues) spans 108-120 (ETTSLRNLQNGSK). The helical transmembrane segment at 206–223 (RLFQILTVSFVIGFTTFI) threads the bilayer. Residues 224–251 (TSCIDWPAVTPHGSLAGVTKSQCIAQMS) are Lumenal-facing. The helical transmembrane segment at 252-270 (PITYLVLWLFLSFLLALWI) threads the bilayer. The Cytoplasmic segment spans residues 271–421 (YYLTDIPRLW…RRRFIVAGFL (151 aa)). The stretch at 422–446 (NCLFAPIVAIYLVIHNFFRYFNEYH) is an intramembrane region. Topologically, residues 447–496 (KNPGALSTRRYTPLALWTFREYNELQHFFDERINDSYAAASHYVSQFPDF) are cytoplasmic. The helical transmembrane segment at 497–522 (NMIRLFKYISFILGSFTAILVIITVF) threads the bilayer. Residues 523 to 537 (DPELMVTFEITKDRS) lie on the Lumenal side of the membrane. A helical membrane pass occupies residues 538-555 (VLFYLGLFGSLIAVSRSI). Residues 556 to 603 (IPDETLVFAPEKALRRVITFTHYMPGWWSDNMHSKAVQQEFCSLYSYR) are Cytoplasmic-facing. An intramembrane segment occupies 604–624 (IVNLLWEILGILLTPVLLFFT). Residues 625-702 (FPSCSQDIVD…NTEAPRRDLR (78 aa)) are Cytoplasmic-facing.

Belongs to the ATG9 family. As to quaternary structure, homotrimer; forms a homotrimer with a central pore that forms a path between the two membrane leaflets. Interacts with ctl1. Phosphorylated by atg1. Atg1 phosphorylation is required for preautophagosome elongation.

It is found in the preautophagosomal structure membrane. Its subcellular location is the cytoplasmic vesicle membrane. The protein localises to the golgi apparatus membrane. It localises to the endoplasmic reticulum membrane. It carries out the reaction a 1,2-diacyl-sn-glycero-3-phosphocholine(in) = a 1,2-diacyl-sn-glycero-3-phosphocholine(out). It catalyses the reaction a 1,2-diacyl-sn-glycero-3-phospho-L-serine(in) = a 1,2-diacyl-sn-glycero-3-phospho-L-serine(out). The enzyme catalyses a 1,2-diacyl-sn-glycero-3-phosphoethanolamine(in) = a 1,2-diacyl-sn-glycero-3-phosphoethanolamine(out). The catalysed reaction is a 1,2-diacyl-sn-glycero-3-phospho-(1D-myo-inositol-3-phosphate)(in) = a 1,2-diacyl-sn-glycero-3-phospho-(1D-myo-inositol-3-phosphate)(out). Functionally, phospholipid scramblase involved in autophagy and cytoplasm to vacuole transport (Cvt) vesicle formation. Cycles between the preautophagosomal structure/phagophore assembly site (PAS) and the cytoplasmic vesicle pool and supplies membrane for the growing autophagosome. Lipid scramblase activity plays a key role in preautophagosomal structure/phagophore assembly by distributing the phospholipids that arrive through atg2 from the cytoplasmic to the luminal leaflet of the bilayer, thereby driving autophagosomal membrane expansion. Also involved in endoplasmic reticulum-specific autophagic process and is essential for the survival of cells subjected to severe ER stress. Different machineries are required for anterograde trafficking to the PAS during either the Cvt pathway or bulk autophagy and for retrograde trafficking. Has a role in meiosis and sporulation. The sequence is that of Autophagy-related protein 9 from Schizosaccharomyces pombe (strain 972 / ATCC 24843) (Fission yeast).